Here is a 679-residue protein sequence, read N- to C-terminus: Patatin-like phospholipase 1 (679 aa).

Disordered stretches follow at residues 19–45 (FSDD…NAEN) and 155–194 (GEYE…NYNS). Polar residues-rich tracts occupy residues 35-45 (YSGSETQNAEN) and 162-176 (TSSY…NTVG). The segment covering 177–188 (SEKEETENKNEE) has biased composition (basic and acidic residues). The 207-residue stretch at 338–544 (LSLDGGGILT…KASNPALIAL (207 aa)) folds into the PNPLA domain. The GXSXG signature appears at 381–385 (GTSAG). Ser383 (nucleophile) is an active-site residue. Residue Asp531 is the Proton acceptor of the active site. The DGA/G signature appears at 531–533 (DGA).

It belongs to the patatin family.

It is found in the cytoplasm. It catalyses the reaction a 1,2-diacyl-sn-glycero-3-phosphocholine + H2O = a 1-acyl-sn-glycero-3-phosphocholine + a fatty acid + H(+). The catalysed reaction is 1,2-dihexadecanoyl-sn-glycero-3-phosphocholine + H2O = 1-hexadecanoyl-sn-glycero-3-phosphocholine + hexadecanoate + H(+). Its function is as follows. Hydrolyzes the ester bond of the fatty acyl group attached at the sn-2 position of phospholipids such as phosphatidylcholine. Involved in gametogenesis; however, it is not clear whether it is involved in gametocytes development in host erythrocytes or in gametocyte activation in the mosquito midgut. Involved in gametocyte development in host erythrocytes; however, not involved in gametocytes activation including male gamete exflagellation. Involved in the rounding up of gametocytes following activation in the mosquito midgut; however, not required for gametocyte development in host erythrocytes. Required for exflagellation of activated male gametocytes. Involved in gametocytes egress from host erythrocytes by promoting the relocalization of perforin-like protein PLP2-containing vesicles to the periphery of gametocytes; PLP2 secretion is required for permeabilization of the erythrocyte membrane and thus, promotes gametocyte egress. Dispensable for asexual blood stage development. This chain is Patatin-like phospholipase 1, found in Plasmodium falciparum (isolate NF54).